The sequence spans 267 residues: Myeloid leukemia factor 1 (267 aa).

Phosphoserine is present on residues Ser6, Ser8, Ser32, and Ser34. Positions 39-67 (RDLLSISDGRGRTHNRRERDDGEDSLTHA) are disordered. Positions 50–125 (RTHNRRERDD…VGDEPPKVFQ (76 aa)) are interaction with COPS3.

This sequence belongs to the MLF family. Interacts with CENPU. Also interacts with NRBP1/MADM, YWHAZ/14-3-3-zeta and HNRPUL2/MANP. NRBP1 recruits a serine kinase which phosphorylates both itself and MLF1. Phosphorylated MLF1 then binds to YWHAZ and is retained in the cytoplasm. Retained in the nucleus by binding to HNRPUL2. Binds to COPS3/CSN3 which is required for suppression of COP1 and activation of p53. Phosphorylation is required for binding to YWHAZ. As to expression, highly expressed in skeletal muscle, heart, testis. Also found in lung, but not in spleen, thymus, bone marrow, liver and kidney.

The protein resides in the cytoplasm. Its subcellular location is the nucleus. The protein localises to the cell projection. It localises to the cilium. It is found in the cytoskeleton. The protein resides in the cilium basal body. Its function is as follows. Involved in lineage commitment of primary hemopoietic progenitors by restricting erythroid formation and enhancing myeloid formation. Interferes with erythropoietin-induced erythroid terminal differentiation by preventing cells from exiting the cell cycle through suppression of CDKN1B/p27Kip1 levels. Suppresses COP1 activity via CSN3 which activates p53 and induces cell cycle arrest. Binds DNA and affects the expression of a number of genes so may function as a transcription factor in the nucleus. The protein is Myeloid leukemia factor 1 (Mlf1) of Mus musculus (Mouse).